Consider the following 278-residue polypeptide: Methyltransferase GfsG (278 aa).

S-adenosyl-L-methionine contacts are provided by residues glutamine 105 and 128–129 (DA). Glutamate 146 functions as the Proton acceptor in the catalytic mechanism. Histidine 150 is an S-adenosyl-L-methionine binding site.

The protein belongs to the methyltransferase superfamily.

Its pathway is antibiotic biosynthesis. Methylase required for synthesis of the 16-membered macrolide antibiotics FD-891 and FD-892. In vitro uses S-adenosyl-L-methionine to methylate a number of biosynthetic intermediates in the synthesis of FD-891. This Streptomyces halstedii protein is Methyltransferase GfsG.